We begin with the raw amino-acid sequence, 411 residues long: Ornithine aminotransferase (411 aa).

Lys-257 is subject to N6-(pyridoxal phosphate)lysine.

The protein belongs to the class-III pyridoxal-phosphate-dependent aminotransferase family. OAT subfamily. Pyridoxal 5'-phosphate serves as cofactor.

The protein localises to the cytoplasm. The enzyme catalyses a 2-oxocarboxylate + L-ornithine = L-glutamate 5-semialdehyde + an L-alpha-amino acid. It functions in the pathway amino-acid biosynthesis; L-proline biosynthesis; L-glutamate 5-semialdehyde from L-ornithine: step 1/1. Its function is as follows. Catalyzes the interconversion of ornithine to glutamate semialdehyde. This Bordetella bronchiseptica (strain ATCC BAA-588 / NCTC 13252 / RB50) (Alcaligenes bronchisepticus) protein is Ornithine aminotransferase.